We begin with the raw amino-acid sequence, 43 residues long: Ferritin light chain (43 aa).

The Ferritin-like diiron domain maps to 1–43; that stretch reads MEAALLVEKNLNQALLDLHGLASARGDPHICDFLENHFLDEEV.

It belongs to the ferritin family. Oligomer of 24 subunits. There are two types of subunits: L (light) chain and H (heavy) chain. The major chain can be light or heavy, depending on the species and tissue type. The functional molecule forms a roughly spherical shell with a diameter of 12 nm and contains a central cavity into which the insoluble mineral iron core is deposited. Interacts with NCOA4.

Its subcellular location is the cytoplasmic vesicle. It localises to the autophagosome. The protein localises to the cytoplasm. The protein resides in the autolysosome. Stores iron in a soluble, non-toxic, readily available form. Important for iron homeostasis. Iron is taken up in the ferrous form and deposited as ferric hydroxides after oxidation. Also plays a role in delivery of iron to cells. Mediates iron uptake in capsule cells of the developing kidney. Delivery to lysosomes by the cargo receptor NCOA4 for autophagic degradation and release or iron. This chain is Ferritin light chain (FTL), found in Ovis aries (Sheep).